We begin with the raw amino-acid sequence, 380 residues long: Alanine racemase (380 aa).

Lys39 functions as the Proton acceptor; specific for D-alanine in the catalytic mechanism. Position 39 is an N6-(pyridoxal phosphate)lysine (Lys39). Residue Arg137 coordinates substrate. Tyr263 (proton acceptor; specific for L-alanine) is an active-site residue. Met310 serves as a coordination point for substrate.

The protein belongs to the alanine racemase family. It depends on pyridoxal 5'-phosphate as a cofactor.

The catalysed reaction is L-alanine = D-alanine. Its pathway is amino-acid biosynthesis; D-alanine biosynthesis; D-alanine from L-alanine: step 1/1. Its function is as follows. Catalyzes the interconversion of L-alanine and D-alanine. May also act on other amino acids. This Macrococcus caseolyticus (strain JCSC5402) (Macrococcoides caseolyticum) protein is Alanine racemase (alr).